Here is a 442-residue protein sequence, read N- to C-terminus: Cell division protein FtsA (442 aa).

A disordered region spans residues 401 to 428 (VTSYDNDSYDAPEETVYDEPEQKKSDED). The segment covering 407–419 (DSYDAPEETVYDE) has biased composition (acidic residues).

This sequence belongs to the FtsA/MreB family. As to quaternary structure, self-interacts. Interacts with FtsZ.

Its subcellular location is the cell membrane. Its function is as follows. Cell division protein that is involved in the assembly of the Z ring. May serve as a membrane anchor for the Z ring. This chain is Cell division protein FtsA, found in Enterococcus hirae.